The sequence spans 332 residues: Large ribosomal subunit protein mL44 (332 aa).

The N-terminal 30 residues, 1–30 (MASGLTRLLLRGPRCLLATAGLTLIPPVRG), are a transit peptide targeting the mitochondrion. Residues 86–228 (DLLKTAFVNS…LITQMTGKEL (143 aa)) form the RNase III domain. The DRBM domain occupies 236–306 (NPMGLLVQEL…ARVALRKLYG (71 aa)).

This sequence belongs to the ribonuclease III family. Mitochondrion-specific ribosomal protein mL44 subfamily. In terms of assembly, component of the mitochondrial ribosome large subunit (39S) which comprises a 16S rRNA and about 50 distinct proteins.

It localises to the mitochondrion. Its function is as follows. Component of the 39S subunit of mitochondrial ribosome. May have a function in the assembly/stability of nascent mitochondrial polypeptides exiting the ribosome. The chain is Large ribosomal subunit protein mL44 (MRPL44) from Bos taurus (Bovine).